The sequence spans 445 residues: Protein cereblon (445 aa).

The tract at residues 1–50 (MAAEEGGDGRRNMGNPPPPAPAESEEEDDNEMEVEDQDGKEAEKPNMINF) is disordered. A compositionally biased stretch (acidic residues) spans 23–36 (ESEEEDDNEMEVED). The region spanning 82–321 (IPVLPHVMVM…CELDIMNKCT (240 aa)) is the Lon N-terminal domain. The region spanning 320–428 (CTSLCCKQCQ…LTRSALLPRI (109 aa)) is the CULT domain. Zn(2+)-binding residues include C325 and C328. Residues H380, W382, and W388 each coordinate (S)-thalidomide. Residues C393 and C396 each coordinate Zn(2+).

The protein belongs to the CRBN family. Component of a DCX (DDB1-CUL4-X-box) protein ligase complex. Interacts directly with DDB1.

The protein localises to the cytoplasm. The protein resides in the nucleus. It functions in the pathway protein modification; protein ubiquitination. Its function is as follows. Substrate recognition component of a DCX (DDB1-CUL4-X-box) E3 protein ligase complex that mediates the ubiquitination and subsequent proteasomal degradation of target proteins, such as MEIS2. Normal degradation of key regulatory proteins is required for normal limb outgrowth and expression of the fibroblast growth factor FGF8. Maintains presynaptic glutamate release and consequently cognitive functions, such as memory and learning, by negatively regulating large-conductance calcium-activated potassium (BK) channels in excitatory neurons. Likely to function by regulating the assembly and neuronal surface expression of BK channels via its interaction with KCNT1. May also be involved in regulating anxiety-like behaviors via a BK channel-independent mechanism. This is Protein cereblon (CRBN) from Gallus gallus (Chicken).